A 305-amino-acid polypeptide reads, in one-letter code: Small ribosomal subunit biogenesis GTPase RsgA (305 aa).

Residues 67–224 enclose the CP-type G domain; the sequence is SSELVRPAVA…VADTPGFSSF (158 aa). GTP is bound by residues 116-119 and 166-174; these read NKID and GQSGVGKST. 4 residues coordinate Zn(2+): Cys-248, Cys-253, His-255, and Cys-261.

It belongs to the TRAFAC class YlqF/YawG GTPase family. RsgA subfamily. In terms of assembly, monomer. Associates with 30S ribosomal subunit, binds 16S rRNA. The cofactor is Zn(2+).

It is found in the cytoplasm. Functionally, one of several proteins that assist in the late maturation steps of the functional core of the 30S ribosomal subunit. Helps release RbfA from mature subunits. May play a role in the assembly of ribosomal proteins into the subunit. Circularly permuted GTPase that catalyzes slow GTP hydrolysis, GTPase activity is stimulated by the 30S ribosomal subunit. The sequence is that of Small ribosomal subunit biogenesis GTPase RsgA from Ruminiclostridium cellulolyticum (strain ATCC 35319 / DSM 5812 / JCM 6584 / H10) (Clostridium cellulolyticum).